We begin with the raw amino-acid sequence, 340 residues long: MLSLSKNWNTLIKPNRVTYENFPETNNKAKIIVEPLERGFGLTLGNAMRRVLLSSLQGAAITSIKIPAIEHEFSSIPGVQEDVSEVILNIKGIEVKMHVSEKRIMKLKATGPCVVTAGMIDTGHDVEILNPNHVICNLAKNKQLEMELTCKVGKGYVLSTNSYEDNLPIGEIAIDALFNPVKSVTYKVENTRVGQVTDYDKLIIFVETNGDVLPEMAVGLAARILQEQLQLFIAFEEQEEDKQVKTDSLPFSPYLLKRVDELELSVRSANCLKNDNIIYIGDLVKRTESDMLRTPNFGRKSLNEIKEILAKFNLRFGMDVPDWPPENIQELSKRYEDSYN.

The tract at residues 1–236 is alpha N-terminal domain (alpha-NTD); sequence MLSLSKNWNT…EQLQLFIAFE (236 aa). The interval 251-340 is alpha C-terminal domain (alpha-CTD); that stretch reads FSPYLLKRVD…LSKRYEDSYN (90 aa).

The protein belongs to the RNA polymerase alpha chain family. In terms of assembly, homodimer. The RNAP catalytic core consists of 2 alpha, 1 beta, 1 beta' and 1 omega subunit. When a sigma factor is associated with the core the holoenzyme is formed, which can initiate transcription.

It carries out the reaction RNA(n) + a ribonucleoside 5'-triphosphate = RNA(n+1) + diphosphate. Its function is as follows. DNA-dependent RNA polymerase catalyzes the transcription of DNA into RNA using the four ribonucleoside triphosphates as substrates. In Rickettsia typhi (strain ATCC VR-144 / Wilmington), this protein is DNA-directed RNA polymerase subunit alpha.